A 397-amino-acid polypeptide reads, in one-letter code: Subtilisin-like protease 12 (397 aa).

A signal peptide spans 1–19 (MSIFKMMLIYFAILWVVNA). The propeptide occupies 20-116 (AQLLDIDPQG…VEPNKEMQVA (97 aa)). Positions 35 to 115 (YIVVMKDRVS…FVEPNKEMQV (81 aa)) constitute an Inhibitor I9 domain. N-linked (GlcNAc...) asparagine glycosylation is found at Asn-123, Asn-136, and Asn-150. The Peptidase S8 domain maps to 125 to 397 (TWGLSRISHK…NKLLYNGSGA (273 aa)). Residues Asp-157 and His-188 each act as charge relay system in the active site. N-linked (GlcNAc...) asparagine glycans are attached at residues Asn-249, Asn-305, and Asn-334. Residue Ser-343 is the Charge relay system of the active site. N-linked (GlcNAc...) asparagine glycans are attached at residues Asn-385 and Asn-393.

This sequence belongs to the peptidase S8 family.

The protein resides in the secreted. Its function is as follows. Secreted subtilisin-like serine protease with keratinolytic activity that contributes to pathogenicity. This is Subtilisin-like protease 12 (SUB12) from Trichophyton verrucosum (strain HKI 0517).